A 126-amino-acid chain; its full sequence is Small ribosomal subunit protein uS12 (126 aa).

Asp-89 is subject to 3-methylthioaspartic acid.

It belongs to the universal ribosomal protein uS12 family. As to quaternary structure, part of the 30S ribosomal subunit. Contacts proteins S8 and S17. May interact with IF1 in the 30S initiation complex.

Its function is as follows. With S4 and S5 plays an important role in translational accuracy. Functionally, interacts with and stabilizes bases of the 16S rRNA that are involved in tRNA selection in the A site and with the mRNA backbone. Located at the interface of the 30S and 50S subunits, it traverses the body of the 30S subunit contacting proteins on the other side and probably holding the rRNA structure together. The combined cluster of proteins S8, S12 and S17 appears to hold together the shoulder and platform of the 30S subunit. In Polynucleobacter asymbioticus (strain DSM 18221 / CIP 109841 / QLW-P1DMWA-1) (Polynucleobacter necessarius subsp. asymbioticus), this protein is Small ribosomal subunit protein uS12.